The primary structure comprises 266 residues: 3-methyl-2-oxobutanoate hydroxymethyltransferase (266 aa).

2 residues coordinate Mg(2+): Asp-45 and Asp-84. Residues 45 to 46, Asp-84, and Lys-112 each bind 3-methyl-2-oxobutanoate; that span reads DS. Glu-114 contributes to the Mg(2+) binding site. Catalysis depends on Glu-181, which acts as the Proton acceptor.

This sequence belongs to the PanB family. Homodecamer; pentamer of dimers. Mg(2+) is required as a cofactor.

The protein resides in the cytoplasm. The enzyme catalyses 3-methyl-2-oxobutanoate + (6R)-5,10-methylene-5,6,7,8-tetrahydrofolate + H2O = 2-dehydropantoate + (6S)-5,6,7,8-tetrahydrofolate. The protein operates within cofactor biosynthesis; (R)-pantothenate biosynthesis; (R)-pantoate from 3-methyl-2-oxobutanoate: step 1/2. In terms of biological role, catalyzes the reversible reaction in which hydroxymethyl group from 5,10-methylenetetrahydrofolate is transferred onto alpha-ketoisovalerate to form ketopantoate. In Pseudomonas fluorescens (strain Pf0-1), this protein is 3-methyl-2-oxobutanoate hydroxymethyltransferase.